The chain runs to 249 residues: tRNA (guanine-N(1)-)-methyltransferase (249 aa).

S-adenosyl-L-methionine contacts are provided by residues G113 and 133–138 (VGDYVL).

It belongs to the RNA methyltransferase TrmD family. Homodimer.

The protein resides in the cytoplasm. The enzyme catalyses guanosine(37) in tRNA + S-adenosyl-L-methionine = N(1)-methylguanosine(37) in tRNA + S-adenosyl-L-homocysteine + H(+). In terms of biological role, specifically methylates guanosine-37 in various tRNAs. The chain is tRNA (guanine-N(1)-)-methyltransferase from Tolumonas auensis (strain DSM 9187 / NBRC 110442 / TA 4).